Consider the following 353-residue polypeptide: Phospho-furanose lactonase (353 aa).

His-25, His-27, Lys-153, His-186, and His-214 together coordinate Zn(2+). Residue Lys-153 is modified to N6-carboxylysine. A substrate-binding site is contributed by 244 to 245; that stretch reads KY. Asp-272 is a binding site for Zn(2+). Residue 275 to 278 coordinates substrate; the sequence is RILY.

This sequence belongs to the metallo-dependent hydrolases superfamily. Phosphotriesterase family. It depends on Zn(2+) as a cofactor.

The enzyme catalyses a 1,4-lactone + H2O = a 4-hydroxyacid + H(+). The catalysed reaction is D-xylono-1,4-lactone 5-phosphate + H2O = 5-phospho-D-xylonate + H(+). It catalyses the reaction L-arabino-1,4-lactone 5-phosphate + H2O = 5-phospho-L-arabinonate + H(+). Functionally, catalyzes the hydrolysis of D-xylono-1,4-lactone-5-phosphate and L-arabino-1,4-lactone-5-phosphate. Also able to hydrolyze carboxy 1,4-lactones. The polypeptide is Phospho-furanose lactonase (Mycoplasmopsis agalactiae (strain NCTC 10123 / CIP 59.7 / PG2) (Mycoplasma agalactiae)).